We begin with the raw amino-acid sequence, 180 residues long: ATP-dependent protease subunit HslV (180 aa).

The active site involves Thr8. Na(+) contacts are provided by Gly165, Cys168, and Thr171.

It belongs to the peptidase T1B family. HslV subfamily. As to quaternary structure, a double ring-shaped homohexamer of HslV is capped on each side by a ring-shaped HslU homohexamer. The assembly of the HslU/HslV complex is dependent on binding of ATP.

It localises to the cytoplasm. The catalysed reaction is ATP-dependent cleavage of peptide bonds with broad specificity.. Allosterically activated by HslU binding. Its function is as follows. Protease subunit of a proteasome-like degradation complex believed to be a general protein degrading machinery. The sequence is that of ATP-dependent protease subunit HslV from Halalkalibacterium halodurans (strain ATCC BAA-125 / DSM 18197 / FERM 7344 / JCM 9153 / C-125) (Bacillus halodurans).